The primary structure comprises 415 residues: Histidine--tRNA ligase (415 aa).

The protein belongs to the class-II aminoacyl-tRNA synthetase family. In terms of assembly, homodimer.

It localises to the cytoplasm. It catalyses the reaction tRNA(His) + L-histidine + ATP = L-histidyl-tRNA(His) + AMP + diphosphate + H(+). This Clostridium botulinum (strain Okra / Type B1) protein is Histidine--tRNA ligase.